The chain runs to 239 residues: Glucosamine-6-phosphate deaminase (239 aa).

The active-site Proton acceptor; for enolization step is Asp62. Catalysis depends on Asn128, which acts as the For ring-opening step. His130 serves as the catalytic Proton acceptor; for ring-opening step. Glu135 (for ring-opening step) is an active-site residue.

It belongs to the glucosamine/galactosamine-6-phosphate isomerase family. NagB subfamily.

The enzyme catalyses alpha-D-glucosamine 6-phosphate + H2O = beta-D-fructose 6-phosphate + NH4(+). The protein operates within amino-sugar metabolism; N-acetylneuraminate degradation; D-fructose 6-phosphate from N-acetylneuraminate: step 5/5. In terms of biological role, catalyzes the reversible isomerization-deamination of glucosamine 6-phosphate (GlcN6P) to form fructose 6-phosphate (Fru6P) and ammonium ion. The chain is Glucosamine-6-phosphate deaminase from Lactobacillus helveticus (strain DPC 4571).